Consider the following 450-residue polypeptide: Asparagine--tRNA ligase (450 aa).

This sequence belongs to the class-II aminoacyl-tRNA synthetase family. Homodimer.

The protein localises to the cytoplasm. It catalyses the reaction tRNA(Asn) + L-asparagine + ATP = L-asparaginyl-tRNA(Asn) + AMP + diphosphate + H(+). The sequence is that of Asparagine--tRNA ligase from Mycoplasmopsis pulmonis (strain UAB CTIP) (Mycoplasma pulmonis).